The sequence spans 355 residues: Phosphate acyltransferase (355 aa).

Belongs to the PlsX family. As to quaternary structure, homodimer. Probably interacts with PlsY.

The protein resides in the cytoplasm. The enzyme catalyses a fatty acyl-[ACP] + phosphate = an acyl phosphate + holo-[ACP]. Its pathway is lipid metabolism; phospholipid metabolism. Catalyzes the reversible formation of acyl-phosphate (acyl-PO(4)) from acyl-[acyl-carrier-protein] (acyl-ACP). This enzyme utilizes acyl-ACP as fatty acyl donor, but not acyl-CoA. The protein is Phosphate acyltransferase of Erythrobacter litoralis (strain HTCC2594).